Reading from the N-terminus, the 178-residue chain is MAKYRKLGRTSSQRKALLRSQVTALIENGKIVTTEARAKEVKKMAEKLITLAVKEKDNFETVKVSAKVPKKDAEGKRVKEVVDGKKVTVYETVEKEIKKDLPSRLHARKQMDKVLYTVTEVPTAAAGKKKNTKTVDLTNKLFDEIAPKYAGRQGGYTRIVKIGLRKGDAAMEVLLELV.

This sequence belongs to the bacterial ribosomal protein bL17 family. As to quaternary structure, part of the 50S ribosomal subunit. Contacts protein L32.

This is Large ribosomal subunit protein bL17 from Lachnospira eligens (strain ATCC 27750 / DSM 3376 / VPI C15-48 / C15-B4) (Eubacterium eligens).